The chain runs to 364 residues: D-alanine--D-alanine ligase (364 aa).

Positions Lys-140–Ser-346 constitute an ATP-grasp domain. Position 173–228 (Glu-173–Glu-228) interacts with ATP. Residues Asp-299, Glu-313, and Asn-315 each contribute to the Mg(2+) site.

This sequence belongs to the D-alanine--D-alanine ligase family. The cofactor is Mg(2+). Requires Mn(2+) as cofactor.

The protein localises to the cytoplasm. It catalyses the reaction 2 D-alanine + ATP = D-alanyl-D-alanine + ADP + phosphate + H(+). It functions in the pathway cell wall biogenesis; peptidoglycan biosynthesis. Cell wall formation. This Caldicellulosiruptor bescii (strain ATCC BAA-1888 / DSM 6725 / KCTC 15123 / Z-1320) (Anaerocellum thermophilum) protein is D-alanine--D-alanine ligase.